Here is a 298-residue protein sequence, read N- to C-terminus: Tyrosine recombinase XerC (298 aa).

The Core-binding (CB) domain maps to 1-85 (MKPIAAFQEY…SLRSFYRYLT (85 aa)). The 186-residue stretch at 106–291 (HLPQFFYEAE…TMAHLKNEYM (186 aa)) folds into the Tyr recombinase domain. Catalysis depends on residues R146, K170, H243, R246, and H269. Catalysis depends on Y278, which acts as the O-(3'-phospho-DNA)-tyrosine intermediate.

It belongs to the 'phage' integrase family. XerC subfamily. In terms of assembly, forms a cyclic heterotetrameric complex composed of two molecules of XerC and two molecules of XerD.

The protein localises to the cytoplasm. Functionally, site-specific tyrosine recombinase, which acts by catalyzing the cutting and rejoining of the recombining DNA molecules. The XerC-XerD complex is essential to convert dimers of the bacterial chromosome into monomers to permit their segregation at cell division. It also contributes to the segregational stability of plasmids. The chain is Tyrosine recombinase XerC from Lacticaseibacillus paracasei (strain ATCC 334 / BCRC 17002 / CCUG 31169 / CIP 107868 / KCTC 3260 / NRRL B-441) (Lactobacillus paracasei).